Reading from the N-terminus, the 1567-residue chain is Myosin-2A (1567 aa).

In terms of domain architecture, Myosin N-terminal SH3-like spans 4-57 (EVGTRCWYPSKEQGWIGAEVTKNDLKDGTYFMELTLEDNEVVNVETKDLTNEKD). The 717-residue stretch at 70–786 (ESTEDLTTLS…MLAYFEKLRS (717 aa)) folds into the Myosin motor domain. An ATP-binding site is contributed by 164–171 (GESGAGKT). Residues 446 to 526 (FIGVLDIYGF…LGILSLLDEE (81 aa)) form an actin-binding region. Residues 619-640 (EEAKKNAASQDQKQLKKPTPIR) are disordered. IQ domains lie at 789 to 818 (MNSA…SLSL), 812 to 836 (MKAS…EYEL), 837 to 859 (EQHA…YISG), 860 to 884 (VISS…QSKY), 885 to 907 (ESNA…AYES), and 908 to 937 (KRRD…DAKS). Residues 947-1091 (KLENKVIQLT…LAHLQTSIAL (145 aa)) adopt a coiled-coil conformation. Residues 1092-1567 (GTVTTNTNIV…VAQQVTVPDA (476 aa)) form a non alpha-helical, tail domain region. Residues 1230-1505 (AQVLTTIQKV…LKYVADIVKK (276 aa)) enclose the Dilute domain.

This sequence belongs to the TRAFAC class myosin-kinesin ATPase superfamily. Myosin family. As to quaternary structure, homodimer. Interacts with calmodulin (CMD1) and the myosin light chain MLC1 through its IQ repeats.

Functionally, myosin heavy chain that is required for the cell cycle-regulated transport of various organelles and proteins for their segregation. Functions by binding with its tail domain to receptor proteins on organelles and exerting force with its N-terminal motor domain against actin filaments, thereby transporting its cargo along polarized actin cables. This chain is Myosin-2A (MYO2A), found in Naumovozyma castellii (Yeast).